A 677-amino-acid chain; its full sequence is UvrABC system protein B (677 aa).

Residues aspartate 31–arginine 417 enclose the Helicase ATP-binding domain. An ATP-binding site is contributed by glycine 44–serine 51. The Beta-hairpin motif lies at tyrosine 97 to valine 120. In terms of domain architecture, Helicase C-terminal spans glutamine 434–valine 596. The 36-residue stretch at lysine 629 to lysine 664 folds into the UVR domain.

The protein belongs to the UvrB family. In terms of assembly, forms a heterotetramer with UvrA during the search for lesions. Interacts with UvrC in an incision complex.

It is found in the cytoplasm. The UvrABC repair system catalyzes the recognition and processing of DNA lesions. A damage recognition complex composed of 2 UvrA and 2 UvrB subunits scans DNA for abnormalities. Upon binding of the UvrA(2)B(2) complex to a putative damaged site, the DNA wraps around one UvrB monomer. DNA wrap is dependent on ATP binding by UvrB and probably causes local melting of the DNA helix, facilitating insertion of UvrB beta-hairpin between the DNA strands. Then UvrB probes one DNA strand for the presence of a lesion. If a lesion is found the UvrA subunits dissociate and the UvrB-DNA preincision complex is formed. This complex is subsequently bound by UvrC and the second UvrB is released. If no lesion is found, the DNA wraps around the other UvrB subunit that will check the other stand for damage. This chain is UvrABC system protein B, found in Tropheryma whipplei (strain TW08/27) (Whipple's bacillus).